A 748-amino-acid polypeptide reads, in one-letter code: Rho GTPase-activating protein 24 (748 aa).

A PH domain is found at 18–124; sequence NATKCGWLRK…WVKSIRRVIW (107 aa). In terms of domain architecture, Rho-GAP spans 134–328; sequence QKLEDTVRYE…VMISKHDRLF (195 aa). Residues 328–476 are disordered; the sequence is FPKDTEPQSK…SSGTKMGTHS (149 aa). Polar residues-rich tracts occupy residues 335–347 and 356–368; these read QSKP…SNNN and GQLQ…NTKE. Ser369, Ser391, Ser396, Ser398, Ser402, Ser413, Ser415, and Ser437 each carry phosphoserine. A compositionally biased stretch (basic and acidic residues) spans 369–381; it reads SPVRRCSWDKPES. The span at 382-405 shows a compositional bias: polar residues; it reads PQRSSMDNGSPTALSGSKTNSPRN. The span at 432 to 476 shows a compositional bias: polar residues; it reads IVTNGSFSSSNAEGVEKTQTTPNGSLQARRTSSLKSSGTKMGTHS. Thr452 carries the phosphothreonine modification. Phosphoserine is present on Ser495. The disordered stretch occupies residues 582–640; sequence DFYGGNFEDPVLDGPPQDDLSHPGDYENKSDRRSVGGRSSRATSSSDNSETFVGNTSSN. Residues 600–615 are compositionally biased toward basic and acidic residues; that stretch reads DLSHPGDYENKSDRRS. Positions 617–630 are enriched in low complexity; the sequence is GGRSSRATSSSDNS. The segment covering 631 to 640 has biased composition (polar residues); it reads ETFVGNTSSN. Residues 649 to 729 adopt a coiled-coil conformation; it reads SSLKQEMTKQ…KEMEQFFSTF (81 aa).

As to quaternary structure, interacts with FLNA. In terms of processing, phosphorylated by ROCK, leading to activate the RacGAP activity.

The protein resides in the cytoplasm. The protein localises to the cytoskeleton. It is found in the cell junction. It localises to the adherens junction. Its subcellular location is the focal adhesion. The protein resides in the cell projection. Rho GTPase-activating protein involved in cell polarity, cell morphology and cytoskeletal organization. Acts as a GTPase activator for the Rac-type GTPase by converting it to an inactive GDP-bound state. Controls actin remodeling by inactivating Rac downstream of Rho leading to suppress leading edge protrusion and promotes cell retraction to achieve cellular polarity. Able to suppress RAC1 and CDC42 activity in vitro. Overexpression induces cell rounding with partial or complete disruption of actin stress fibers and formation of membrane ruffles, lamellipodia, and filopodia. Isoform 2 is a vascular cell-specific GAP involved in modulation of angiogenesis. In Rattus norvegicus (Rat), this protein is Rho GTPase-activating protein 24 (Arhgap24).